A 677-amino-acid chain; its full sequence is Beta-galactosidase BgaA (677 aa).

Arg112 provides a ligand contact to substrate. Cys116 lines the Zn(2+) pocket. Asn150 provides a ligand contact to substrate. Catalysis depends on Glu151, which acts as the Proton donor. 3 residues coordinate Zn(2+): Cys156, Cys158, and Cys161. Catalysis depends on Glu309, which acts as the Nucleophile. Substrate-binding positions include Trp317 and 357–360 (EKYH).

Belongs to the glycosyl hydrolase 42 family. As to quaternary structure, dimer.

It carries out the reaction Hydrolysis of terminal non-reducing beta-D-galactose residues in beta-D-galactosides.. Its activity is regulated as follows. No activity is lost during treatment with 20 or 100 mM EDTA in Z buffer for 3 hours at 0 degrees Celsius, nor is activity greatly stimulated by the addition of cations. Inhibited by 1 mM zinc and 1 mM copper, the levels of activity decrease to 10% of the untreated control. Nickel, cobalt and manganese at concentrations of 10 mM decrease enzyme activity to either 40% (for nickel and cobalt) or 60% (for manganese) of the activity in untreated controls. No change in enzyme activity in the presence of calcium and magnesium at concentrations up to 50 mM. EDTA-treated enzyme exhibits a slight increase in relative specific activity when it is assayed in the presence of 50 mM NaCl or 50 mM KCl, it does not exhibit enhanced activity at concentrations greater than 250 mM. Maintains between 20 and 40% of activity in the presence of 4 M NaCl or 4 M KCl, and it is more active in the presence of KCl than in the presence of NaCl. Retains 50% of activity in the presence of 3 M KCl or 2.5 M NaCl. Functionally, hydrolyzes o-nitrophenyl-beta-D-galactopyranoside (ONPG), p-nitrophenyl-beta-D-galactopyranoside (PNPG), 5-bromo-4-chloro-3-indoyl-beta-D-galactosde (X-gal), o-nitrophenyl-beta-D-fucopyranoside (ONPF) and p-nitrophenyl-beta-D-fucopyranoside (PNPF) with greatest activity towards ONPG and PNPG and low levels of activity with ONPF and PNPF. Detectable, but very low levels of activity towards p-nitrophenyl-beta-lactose (PNPL), p-nitrophenyl-beta-cellobiose (PNPC), p-nitrophenyl-alpha-galactopyranoside (PNP-alpha-G), and p-nitrophenyl-beta-xylopyranoside (PNPX). This chain is Beta-galactosidase BgaA, found in Planococcus sp. (strain 'SOS Orange').